Consider the following 157-residue polypeptide: Protein Smg (157 aa).

Belongs to the Smg family.

The chain is Protein Smg from Pectobacterium carotovorum subsp. carotovorum (strain PC1).